Reading from the N-terminus, the 578-residue chain is Potassium-transporting ATPase potassium-binding subunit (578 aa).

10 consecutive transmembrane segments (helical) span residues 3 to 23 (NAIL…IPLG), 65 to 85 (SFSV…LNLL), 134 to 154 (GLTV…FALI), 175 to 195 (IVLY…VSQG), 261 to 281 (FSNL…CFTF), 293 to 313 (AIFI…GVSE), 397 to 417 (GLYG…LMVG), 435 to 455 (AMLI…LASI), 503 to 523 (IGLI…AIAG), and 543 to 563 (LLFI…SFFP).

This sequence belongs to the KdpA family. The system is composed of three essential subunits: KdpA, KdpB and KdpC.

The protein localises to the cell membrane. Its function is as follows. Part of the high-affinity ATP-driven potassium transport (or Kdp) system, which catalyzes the hydrolysis of ATP coupled with the electrogenic transport of potassium into the cytoplasm. This subunit binds the extracellular potassium ions and delivers the ions to the membrane domain of KdpB through an intramembrane tunnel. In Clostridium perfringens (strain ATCC 13124 / DSM 756 / JCM 1290 / NCIMB 6125 / NCTC 8237 / Type A), this protein is Potassium-transporting ATPase potassium-binding subunit.